The sequence spans 859 residues: DNA mismatch repair protein MutS (859 aa).

612–619 (GPNMGGKS) provides a ligand contact to ATP. The interval 797 to 822 (SKPLAPSATPPSSYAAPSPAAAPAQA) is disordered.

The protein belongs to the DNA mismatch repair MutS family.

This protein is involved in the repair of mismatches in DNA. It is possible that it carries out the mismatch recognition step. This protein has a weak ATPase activity. This is DNA mismatch repair protein MutS from Alcanivorax borkumensis (strain ATCC 700651 / DSM 11573 / NCIMB 13689 / SK2).